Here is a 729-residue protein sequence, read N- to C-terminus: Phosphoribosylformylglycinamidine synthase subunit PurL (729 aa).

His-54 is a catalytic residue. ATP-binding residues include Tyr-57 and Lys-96. Glu-98 contributes to the Mg(2+) binding site. Substrate is bound by residues 99-102 (SHNH) and Arg-121. His-100 (proton acceptor) is an active-site residue. A Mg(2+)-binding site is contributed by Asp-122. A substrate-binding site is contributed by Gln-245. Asp-273 provides a ligand contact to Mg(2+). 317-319 (ETQ) contacts substrate. Positions 495 and 532 each coordinate ATP. Position 533 (Asn-533) interacts with Mg(2+). Ser-535 lines the substrate pocket.

The protein belongs to the FGAMS family. In terms of assembly, monomer. Part of the FGAM synthase complex composed of 1 PurL, 1 PurQ and 2 PurS subunits.

It localises to the cytoplasm. The enzyme catalyses N(2)-formyl-N(1)-(5-phospho-beta-D-ribosyl)glycinamide + L-glutamine + ATP + H2O = 2-formamido-N(1)-(5-O-phospho-beta-D-ribosyl)acetamidine + L-glutamate + ADP + phosphate + H(+). The protein operates within purine metabolism; IMP biosynthesis via de novo pathway; 5-amino-1-(5-phospho-D-ribosyl)imidazole from N(2)-formyl-N(1)-(5-phospho-D-ribosyl)glycinamide: step 1/2. Its function is as follows. Part of the phosphoribosylformylglycinamidine synthase complex involved in the purines biosynthetic pathway. Catalyzes the ATP-dependent conversion of formylglycinamide ribonucleotide (FGAR) and glutamine to yield formylglycinamidine ribonucleotide (FGAM) and glutamate. The FGAM synthase complex is composed of three subunits. PurQ produces an ammonia molecule by converting glutamine to glutamate. PurL transfers the ammonia molecule to FGAR to form FGAM in an ATP-dependent manner. PurS interacts with PurQ and PurL and is thought to assist in the transfer of the ammonia molecule from PurQ to PurL. This Staphylococcus carnosus (strain TM300) protein is Phosphoribosylformylglycinamidine synthase subunit PurL.